A 459-amino-acid polypeptide reads, in one-letter code: Alcohol acyl transferase 1 allele GSd (459 aa).

Catalysis depends on proton acceptor residues His164 and Asn385.

It belongs to the plant acyltransferase family. In terms of tissue distribution, expressed at very low levels in the cortex and skin of ripe fruit.

Involved in the biosynthesis of volatile esters which confer ripe apple fruit flavor. Alcohol acyl transferase that can use a wide range of alcohols as substrate to produce esters. The protein is Alcohol acyl transferase 1 allele GSd of Malus domestica (Apple).